The sequence spans 231 residues: 7-cyano-7-deazaguanine synthase (231 aa).

Position 8-18 (8-18) interacts with ATP; that stretch reads FSGGQDSTTCL. The Zn(2+) site is built by Cys188, Cys197, Cys200, and Cys203.

Belongs to the QueC family. Zn(2+) is required as a cofactor.

It carries out the reaction 7-carboxy-7-deazaguanine + NH4(+) + ATP = 7-cyano-7-deazaguanine + ADP + phosphate + H2O + H(+). It participates in purine metabolism; 7-cyano-7-deazaguanine biosynthesis. In terms of biological role, catalyzes the ATP-dependent conversion of 7-carboxy-7-deazaguanine (CDG) to 7-cyano-7-deazaguanine (preQ(0)). In Salmonella newport (strain SL254), this protein is 7-cyano-7-deazaguanine synthase.